The primary structure comprises 203 residues: MSRNEVLLNGDINFKEVRCVGDNGEVYGIISSKEALHIAQNLGLDLVLISASAKPPVCKVMDYNKFRYQNEKKIKEAKKKQKQIEIKEIKLSTQIAQNDINYKVKHAREFIESNKHVKFKVVLKGRESQNSKAGLDVLFRVQTMMQDLANPEKEPKTEGRFVSWMFVPKAKEAPKNEKKTKENNPPFNRINLMKGENHAKNED.

Over residues 172 to 182 (EAPKNEKKTKE) the composition is skewed to basic and acidic residues. The disordered stretch occupies residues 172 to 203 (EAPKNEKKTKENNPPFNRINLMKGENHAKNED).

The protein belongs to the IF-3 family. In terms of assembly, monomer.

It localises to the cytoplasm. Functionally, IF-3 binds to the 30S ribosomal subunit and shifts the equilibrium between 70S ribosomes and their 50S and 30S subunits in favor of the free subunits, thus enhancing the availability of 30S subunits on which protein synthesis initiation begins. The protein is Translation initiation factor IF-3 of Helicobacter pylori (strain ATCC 700392 / 26695) (Campylobacter pylori).